The following is a 300-amino-acid chain: Protoheme IX farnesyltransferase (300 aa).

A run of 9 helical transmembrane segments spans residues 24-44, 48-68, 94-114, 118-138, 146-166, 172-192, 217-237, 239-259, and 278-298; these read VTQLAVFCAVIGMFLATPGMV, VLLGGTIGIGLLAGSAFAINC, LQILAFSTVLGGLGAWTLYTF, LTIWLTIATFVGYAVIYTLLL, IVIGGASGAMPPALGWAAVTG, AWILVLIIFVWTPPHFWVLAL, LHILLYTVILFAVTMMPFISG, SGAVYLTSAVLLGALFLAYAW, and IVYLSLLFAALLVDHYARPVI.

Belongs to the UbiA prenyltransferase family. Protoheme IX farnesyltransferase subfamily.

It localises to the cell inner membrane. The enzyme catalyses heme b + (2E,6E)-farnesyl diphosphate + H2O = Fe(II)-heme o + diphosphate. It functions in the pathway porphyrin-containing compound metabolism; heme O biosynthesis; heme O from protoheme: step 1/1. In terms of biological role, converts heme B (protoheme IX) to heme O by substitution of the vinyl group on carbon 2 of heme B porphyrin ring with a hydroxyethyl farnesyl side group. The chain is Protoheme IX farnesyltransferase from Burkholderia mallei (strain NCTC 10247).